The following is a 232-amino-acid chain: Orotidine 5'-phosphate decarboxylase (232 aa).

Substrate contacts are provided by residues D11, K33, 60–69, T120, R181, Q191, G211, and R212; that span reads DLKFHDIPTT. Residue K62 is the Proton donor of the active site.

This sequence belongs to the OMP decarboxylase family. Type 1 subfamily. Homodimer.

It carries out the reaction orotidine 5'-phosphate + H(+) = UMP + CO2. The protein operates within pyrimidine metabolism; UMP biosynthesis via de novo pathway; UMP from orotate: step 2/2. Catalyzes the decarboxylation of orotidine 5'-monophosphate (OMP) to uridine 5'-monophosphate (UMP). This is Orotidine 5'-phosphate decarboxylase from Tolumonas auensis (strain DSM 9187 / NBRC 110442 / TA 4).